Consider the following 392-residue polypeptide: Multidrug resistance protein MdtL (392 aa).

12 helical membrane passes run 4 to 24, 38 to 58, 69 to 89, 95 to 115, 131 to 151, 158 to 178, 209 to 229, 246 to 266, 270 to 290, 294 to 314, 331 to 351, and 357 to 377; these read FLLC…MYLV, AQLH…MLFA, PVAI…AQVH, LIGR…AFAI, LLNG…HLIM, SLFY…VFIL, LLIT…SPVL, ALMA…LSLF, TLML…SLAT, VTLI…GVAM, VLGI…AIIG, and MLIG…LVVT.

It belongs to the major facilitator superfamily. DHA1 family. MdtL (TC 2.A.1.2.22) subfamily.

The protein localises to the cell inner membrane. The chain is Multidrug resistance protein MdtL from Klebsiella pneumoniae subsp. pneumoniae (strain ATCC 700721 / MGH 78578).